The chain runs to 301 residues: UDP-N-acetylenolpyruvoylglucosamine reductase (301 aa).

One can recognise an FAD-binding PCMH-type domain in the interval 29–195 (KIGGPADVFV…VEAIFSLTRG (167 aa)). R174 is an active-site residue. The Proton donor role is filled by S224. E294 is a catalytic residue.

Belongs to the MurB family. FAD is required as a cofactor.

It localises to the cytoplasm. The enzyme catalyses UDP-N-acetyl-alpha-D-muramate + NADP(+) = UDP-N-acetyl-3-O-(1-carboxyvinyl)-alpha-D-glucosamine + NADPH + H(+). Its pathway is cell wall biogenesis; peptidoglycan biosynthesis. Cell wall formation. The chain is UDP-N-acetylenolpyruvoylglucosamine reductase from Halalkalibacterium halodurans (strain ATCC BAA-125 / DSM 18197 / FERM 7344 / JCM 9153 / C-125) (Bacillus halodurans).